Here is a 173-residue protein sequence, read N- to C-terminus: NAD(P)H-quinone oxidoreductase subunit I, chloroplastic (173 aa).

2 4Fe-4S ferredoxin-type domains span residues 55–84 (GRIH…VDWD) and 95–124 (RSYS…MTEE). Residues cysteine 64, cysteine 67, cysteine 70, cysteine 74, cysteine 104, cysteine 107, cysteine 110, and cysteine 114 each coordinate [4Fe-4S] cluster.

It belongs to the complex I 23 kDa subunit family. As to quaternary structure, NDH is composed of at least 16 different subunits, 5 of which are encoded in the nucleus. [4Fe-4S] cluster serves as cofactor.

Its subcellular location is the plastid. It is found in the chloroplast thylakoid membrane. It carries out the reaction a plastoquinone + NADH + (n+1) H(+)(in) = a plastoquinol + NAD(+) + n H(+)(out). The catalysed reaction is a plastoquinone + NADPH + (n+1) H(+)(in) = a plastoquinol + NADP(+) + n H(+)(out). NDH shuttles electrons from NAD(P)H:plastoquinone, via FMN and iron-sulfur (Fe-S) centers, to quinones in the photosynthetic chain and possibly in a chloroplast respiratory chain. The immediate electron acceptor for the enzyme in this species is believed to be plastoquinone. Couples the redox reaction to proton translocation, and thus conserves the redox energy in a proton gradient. The sequence is that of NAD(P)H-quinone oxidoreductase subunit I, chloroplastic from Nephroselmis olivacea (Green alga).